The sequence spans 54 residues: Potassium channel toxin alpha-KTx 14.1 (54 aa).

The first 23 residues, 1 to 23, serve as a signal peptide directing secretion; it reads MKIFFAILLILAVCSMAIWTVNG.

It belongs to the short scorpion toxin superfamily. Potassium channel inhibitor family. Alpha-KTx 14 subfamily. Post-translationally, probably has three disulfide bridges. As to expression, expressed by the venom gland.

It is found in the secreted. Its function is as follows. Potential blocker of potassium channels. This Olivierus martensii (Manchurian scorpion) protein is Potassium channel toxin alpha-KTx 14.1.